Here is a 567-residue protein sequence, read N- to C-terminus: Arginine--tRNA ligase (567 aa).

The 'HIGH' region signature appears at 121-131 (ANPNGPLHVGH).

It belongs to the class-I aminoacyl-tRNA synthetase family.

It localises to the cytoplasm. The catalysed reaction is tRNA(Arg) + L-arginine + ATP = L-arginyl-tRNA(Arg) + AMP + diphosphate. This chain is Arginine--tRNA ligase, found in Methanococcoides burtonii (strain DSM 6242 / NBRC 107633 / OCM 468 / ACE-M).